The sequence spans 202 residues: Ras-related protein RABD2b (202 aa).

GTP contacts are provided by residues 15 to 23, 33 to 40, 63 to 67, 121 to 124, and 151 to 153; these read GDSGVGKSC, YLDSYIST, DTAGQ, NKND, and SAK. The Effector region signature appears at 37–45; sequence YISTIGVDF. The disordered stretch occupies residues 174 to 202; the sequence is ASQPAGGAKPPTVQIRGQPVNQQSGCCSS. Over residues 192-202 the composition is skewed to polar residues; it reads PVNQQSGCCSS. Residues C199 and C200 are each lipidated (S-geranylgeranyl cysteine).

Belongs to the small GTPase superfamily. Rab family.

The protein resides in the golgi apparatus. Its subcellular location is the trans-Golgi network membrane. It is found in the golgi apparatus membrane. In terms of biological role, protein transport. Regulator of membrane traffic from the Golgi apparatus towards the endoplasmic reticulum (ER). The sequence is that of Ras-related protein RABD2b (RABD2B) from Arabidopsis thaliana (Mouse-ear cress).